We begin with the raw amino-acid sequence, 616 residues long: KIF-binding protein (616 aa).

The disordered stretch occupies residues 52–78 (EEEEESEAEGKEERRDGPESGGRRGES). Positions 59 to 78 (AEGKEERRDGPESGGRRGES) are enriched in basic and acidic residues.

This sequence belongs to the KIF-binding protein family.

The protein resides in the cytoplasm. Its subcellular location is the cytoskeleton. Functionally, activator of KIF1B plus-end-directed microtubule motor activity. Required for organization of axonal microtubules, and axonal outgrowth and maintenance during peripheral and central nervous system development. In Xenopus tropicalis (Western clawed frog), this protein is KIF-binding protein.